The following is a 142-amino-acid chain: HTH-type transcriptional regulator MntR (142 aa).

An HTH dtxR-type domain is found at 1-63; the sequence is MPTPSMEDYI…YEKYRGLILT (63 aa). 6 residues coordinate Mn(2+): Asp8, Glu11, His77, Glu99, Glu102, and His103.

This sequence belongs to the DtxR/MntR family. Homodimer.

It localises to the cytoplasm. Its activity is regulated as follows. DNA binding is strongly activated by Mn(2+). Central regulator of manganese homeostasis. This is HTH-type transcriptional regulator MntR from Listeria monocytogenes serotype 4b (strain CLIP80459).